The chain runs to 182 residues: Putative pre-16S rRNA nuclease (182 aa).

This sequence belongs to the YqgF nuclease family.

It is found in the cytoplasm. Could be a nuclease involved in processing of the 5'-end of pre-16S rRNA. This chain is Putative pre-16S rRNA nuclease, found in Corynebacterium glutamicum (strain ATCC 13032 / DSM 20300 / JCM 1318 / BCRC 11384 / CCUG 27702 / LMG 3730 / NBRC 12168 / NCIMB 10025 / NRRL B-2784 / 534).